We begin with the raw amino-acid sequence, 1061 residues long: MQGKNSHLTGITGTTHFTIFGASPRSMSLVKNSQETPPFPGMNSTMRPVEFNSTKQPEAQTIDQEQDAPKSFDFKNQTLGVYSDTVLNPLKNDSFKDELVVDVQKNLPIESLTVSPKSSTDQNCRSTNEAIRIAGFDNFADQLQESNGVFEACPEAHSEQGNESEDFKDLINSETECNIEDVVLPTVHVSTDSEEIISGDVIMNDSNVVSKPKNLEKVETPDVLIGSGSNDKLSDMTEQIGNNQHLEKLISEKTEKSLSDNETTLKPVPVQHTNSVGSSIGTTSGDSEISDDDQKSWSPKNESLDYQPASTSSEFTETTSVANQTESNAGSVDDYCPRTSIDIGLDSSAPSCSSDATREPTPIKKRGRKKKEQSATEPPIPRTKRAYTKNPNTIRKRRMKKNQSDDEEDDGPPKRRTINYQIEFRDASGAWTMAQQLIFVRDFMSKKNDKIVKLSKSRQDRVDKFILQFQKTQDSHYMRAAIQLNTIFPDQGNYRHCQDYLKDLTIRVVVPPKRREGKRKSEVPANPPALLLTGPLYLNFYCTSQEVLEAAGQLLEFHVNAVYKDERLQPPVADKTLLDLERAMYHEQVKDLTDYHKYRIPCPTLTVTTKEEVFSSDFERILNSASITNISGIAKALNIKTELFSLPEIAKCHPELSIDILNQVPQSADGNCDSKGIRCWDVTSYSSKMKLQDFERYMQKEESEAMQAFETISNCTAKELESTCQKLKAERIAAQNAIEGCDETMPWIKFGTNIDLLSENFKKQMNEIEKLPTFLLPNREGNLLNYAGVDVLGINTVQMYAKPIGSRTPAHMENSLMASINWNRGPGTCVWFAVPYEYWGQLEFMIGEHGHKYQDQDYWPSEKELLELGVPVIKFEQKADEMVYVNTGCFHWVQSNSFCINVSWNVGQPNFTQLATSIVAHDHNMLIGNQAHVPLVNLVWNAARQRLFVDDPEMYKAMRGVMIRSLAHSKWYFDLIDHHDYIVGDASEWKLADRVQRCKYCTSEIFNIVRWYTTEDLSVDSYPFCSHCHVANEYKKDRFLKYTWFFSLETLVNIFDAYVPN.

Disordered regions lie at residues 30–49 (VKNS…MRPV) and 256–417 (KSLS…KRRT). Residues 271 to 287 (QHTNSVGSSIGTTSGDS) are compositionally biased toward polar residues. Residues 310-320 (STSSEFTETTS) are compositionally biased toward low complexity. Residues 321–330 (VANQTESNAG) show a composition bias toward polar residues. A required for nuclear localization region spans residues 369–417 (KKKEQSATEPPIPRTKRAYTKNPNTIRKRRMKKNQSDDEEDDGPPKRRT). The interval 418–759 (INYQIEFRDA…FGTNIDLLSE (342 aa)) is required for binding of unc-3 and for function in Y-to-PDA transdifferentiation. Residues 760-923 (NFKKQMNEIE…LATSIVAHDH (164 aa)) form the JmjC domain. Fe cation-binding residues include His811, Glu813, and His891. Residues Cys998, Cys1001, Cys1025, and Cys1028 each contribute to the Zn(2+) site.

It belongs to the UTX family. In terms of assembly, interacts with wdr-5.1 and unc-3. Fe(2+) serves as cofactor. As to expression, mainly expressed in head and tail.

It is found in the nucleus. Its function is as follows. Histone demethylase that specifically demethylates trimethylated 'Lys-27' of histone H3, a mark associated with transcriptional repression, thereby playing a central role in the histone code. Involved in the transcriptional regulation of the heat shock response, unfolded protein response and possibly other stress response target genes. Required for gonad development and organization. Required for the robust transdifferentiation of the Y rectal epithelial cell to the PDA motor neuron during larval development. Acts cell-autonomously in Y-to-PDA transdifferentiation, which depends on the demethylase activity and on recognition of the H3 tail. Cooperates with set-2 and unc-3 to ensure robust Y-to-PDA transdifferentiation. Promotes mitochondrial stress-induced longevity. Involved in lifespan regulation. This chain is Lysine-specific demethylase jmjd-3.1, found in Caenorhabditis elegans.